A 540-amino-acid polypeptide reads, in one-letter code: DNA-(apurinic or apyrimidinic site) endonuclease (540 aa).

2 residues coordinate Mg(2+): asparagine 206 and glutamate 239. The disordered stretch occupies residues 256–276 (NNKVYGGKKNEGEERNRGSVK). Residues 263-276 (KKNEGEERNRGSVK) show a composition bias toward basic and acidic residues. Mg(2+) is bound by residues aspartate 400, asparagine 402, aspartate 530, and histidine 531. Catalysis depends on histidine 531, which acts as the Proton acceptor.

The protein belongs to the DNA repair enzymes AP/ExoA family. Requires Mg(2+) as cofactor. Mn(2+) serves as cofactor. Post-translationally, may be proteolytically cleaved.

The protein resides in the mitochondrion. The catalysed reaction is Exonucleolytic cleavage in the 3'- to 5'-direction to yield nucleoside 5'-phosphates.. Its function is as follows. Multifunctional protein that plays a central role in mitochondrial DNA base excision repair pathway induced by oxidative stress. Has apurinic/apyrimidinic (AP) endonuclease activity towards double-stranded DNA (dsDNA). Has nucleotide incision repair (NIR) activity; acts on dsDNA with oxidized bases thymine glycol and 5,6-dihydro-2'-deoxyuridine. Has 3'-5' exonuclease; can use dsDNA templates with 3'-OH termini including blunt-end, gapped and mismatched 3'-recessed. Has 3'-phosphatase activity; cleaves 3'-phosphate from blunt, recessed and gapped dsDNA templates, followed by 3'-5' exonuclease activity. Has RNase H-like activity; cleaves RNA on 3'-recessed RNA-DNA duplex. Plays a role in merosome infection of host erythrocytes. The polypeptide is DNA-(apurinic or apyrimidinic site) endonuclease (Plasmodium berghei (strain Anka)).